The sequence spans 496 residues: Ganglioside-induced differentiation-associated protein 2 (496 aa).

A disordered region spans residues E25–P48. A Macro domain is found at H44–F224. Residues D329–N483 enclose the CRAL-TRIO domain.

Belongs to the GDAP2 family.

In Xenopus laevis (African clawed frog), this protein is Ganglioside-induced differentiation-associated protein 2.